A 590-amino-acid chain; its full sequence is MPVVTIHYDKLVKILGREVSFEELAHNLIPMLGSDVERIDEREMVIETEFFPNRPDLYSVEGVARALKGFLGIETGIPEYNVRRSDVEARVEESVLDARPCLAVAVVRGVEFEDERDLEHLMEFQEHLHWVIGRDRKKAAIGIHDFEAVEPPLRYFLADPNDRSWAFEPLDHPGEEMTPAEVLRRHEKGRQYAHLVSDGAPILADEEGVISFPPVINSERTRVTQDTTDLLIDVTGTDWRSVLDALHVIVCNLAERGAEILTVEILGAYERTTPTMELDVWDVPVSEARKLLGIDLSGEQLEELLERARHGAIFVPEGERELREYPLPDVYHIEADWREIPPILYEEDVVRVFVGPRRTNILHEWDLIEDAGIMYNYDRFEPTVPDFYTPSRADREREFINVVRDTLARMKFVEVNSLTLISPEENYRKMRLEPDGRAVKLANPIQKEYTIVRTWILPSLMRFLADNKHRPYPQRVFELGEVIERDEDAETGAKDRWKLALAIAGPGVGFSEIKSVVEALLRELDVTGWEITERKHRSFINGRCAAVLADGRELGFFGEIHPEVLTEFDLEVPVVGGEFDVAALRTAAGW.

The B5 domain occupies M276–P382. Mg(2+) is bound by residues N360, D366, E369, and D370.

The protein belongs to the phenylalanyl-tRNA synthetase beta subunit family. Type 2 subfamily. In terms of assembly, tetramer of two alpha and two beta subunits. Requires Mg(2+) as cofactor.

Its subcellular location is the cytoplasm. The enzyme catalyses tRNA(Phe) + L-phenylalanine + ATP = L-phenylalanyl-tRNA(Phe) + AMP + diphosphate + H(+). The chain is Phenylalanine--tRNA ligase beta subunit from Methanopyrus kandleri (strain AV19 / DSM 6324 / JCM 9639 / NBRC 100938).